The sequence spans 1094 residues: Protein transport protein Sec24C (1094 aa).

The segment at 1 to 338 (MNVNQSVPPV…PIQVIEDDRN (338 aa)) is disordered. Residues 8–19 (PPVPPFGQPQPI) show a composition bias toward pro residues. Composition is skewed to low complexity over residues 20–29 (YPGYHQSSYG) and 60–77 (SRAP…AQAP). The segment covering 90-101 (DVQNGPSSTVQM) has biased composition (polar residues). The segment covering 123 to 132 (VLQPYGPPPT) has biased composition (pro residues). Composition is skewed to polar residues over residues 133–144 (SAQVATQLSGMQ), 165–175 (SLASASGSFPN), 189–215 (PLSQ…SFTP), and 240–251 (SVSQPNHVSSPP). Thr-214 carries the phosphothreonine modification. Positions 273–282 (PQQPGYQPQQ) are enriched in low complexity. Cys-425, Cys-428, Cys-447, and Cys-450 together coordinate Zn(2+). The tract at residues 425 to 450 (CNRCKAYMCPFMQFIEGGRRFQCCFC) is zinc finger-like. Residues 962-1034 (TTEPPAVRAS…DNPLSKKVRG (73 aa)) form a Gelsolin-like repeat.

The protein belongs to the SEC23/SEC24 family. SEC24 subfamily. COPII is composed of at least five proteins: the Sec23/24 complex, the Sec13/31 complex and Sar1. Interacts with TMED2 and TMED10. Interacts with GOSR2 (via IxM motif) and STX5 (via IxM motif); recruits GOSR2 and STX5 into COPII-coated vesicles. Interacts with DDHD1. Interacts with STING1; promoting STING1 translocation to the COPII vesicles. Ubiquitous.

The protein localises to the cytoplasmic vesicle. The protein resides in the COPII-coated vesicle membrane. Its subcellular location is the endoplasmic reticulum membrane. It is found in the cytoplasm. It localises to the cytosol. Its function is as follows. Component of the coat protein complex II (COPII) which promotes the formation of transport vesicles from the endoplasmic reticulum (ER). The coat has two main functions, the physical deformation of the endoplasmic reticulum membrane into vesicles and the selection of cargo molecules for their transport to the Golgi complex. Plays a central role in cargo selection within the COPII complex and together with SEC24D may have a different specificity compared to SEC24A and SEC24B. May more specifically package GPI-anchored proteins through the cargo receptor TMED10. May also be specific for IxM motif-containing cargos like the SNAREs GOSR2 and STX5. The protein is Protein transport protein Sec24C of Homo sapiens (Human).